We begin with the raw amino-acid sequence, 616 residues long: Auxin efflux carrier component 4 (616 aa).

Over 1 to 7 the chain is Extracellular; the sequence is MITWHDL. A helical transmembrane segment spans residues 8 to 28; it reads YTVLTAVVPLYVAMILAYGSV. Residues 29 to 38 lie on the Cytoplasmic side of the membrane; the sequence is QWWKIFSPDQ. Residues 39-59 traverse the membrane as a helical segment; sequence CSGINRFVAIFAVPLLSFHFI. Val-51 lines the (indol-3-yl)acetate pocket. The Extracellular portion of the chain corresponds to 60 to 70; it reads STNDPYAMNFR. A helical membrane pass occupies residues 71–91; sequence FVAADTLQKIIMLVLLALWAN. Residues 92–101 are Cytoplasmic-facing; that stretch reads LTKNGSLEWM. Residues 102–122 traverse the membrane as a helical segment; sequence ITIFSLSTLPNTLVMGIPLLI. (indol-3-yl)acetate is bound by residues Asn-112 and Leu-114. The Extracellular portion of the chain corresponds to 123–131; that stretch reads AMYGTYAGS. The chain crosses the membrane as a helical span at residues 132–152; it reads LMVQVVVLQCIIWYTLLLFLF. Residue Tyr-145 participates in (indol-3-yl)acetate binding. Residues 153–476 lie on the Cytoplasmic side of the membrane; sequence EYRGAKLLIM…LIRNPNTYSS (324 aa). Phosphoserine occurs at positions 223, 240, and 280. Residues 302–343 form a disordered region; it reads AAGSYPAPNPEFSTGTGVSTKPNKIPKENQQQLQEKDSKASH. Residues 312-334 are compositionally biased toward polar residues; it reads EFSTGTGVSTKPNKIPKENQQQL. 2 positions are modified to phosphoserine: Ser-358 and Ser-395. Residues 390-411 form a disordered region; sequence DQPRKSNARGGGDDIGGLDSGE. A compositionally biased stretch (gly residues) spans 398 to 409; sequence RGGGDDIGGLDS. Residues 477–497 traverse the membrane as a helical segment; the sequence is LIGLIWALVAYRWHVAMPKIL. At 498–500 the chain is on the extracellular side; it reads QQS. The chain crosses the membrane as a helical span at residues 501 to 521; the sequence is ISILSDAGLGMAMFSLGLFMA. At 522–535 the chain is on the cytoplasmic side; sequence LQPKIIACGNSVAT. The helical transmembrane segment at 536 to 556 threads the bilayer; it reads FAMAVRFITGPAIMAVAGIAI. The Extracellular segment spans residues 557 to 561; that stretch reads GLHGD. The helical transmembrane segment at 562-582 threads the bilayer; that stretch reads LLRIAIVQAALPQGIVPFVFA. (indol-3-yl)acetate is bound by residues Ile-576 and Val-577. The Cytoplasmic segment spans residues 583–595; that stretch reads KEYNVHPTILSTG. The chain crosses the membrane as a helical span at residues 596–616; sequence VIFGMLIALPITLVYYILLGL.

The protein belongs to the auxin efflux carrier (TC 2.A.69.1) family. In terms of assembly, homodimer. In terms of tissue distribution, expressed in the quiescent center precursors and surrounding cells. Present in columella cells of primary roots. Detected in pollen.

It is found in the cell membrane. In terms of biological role, acts as a component of the auxin efflux carrier. Plays a role in generating a sink for auxin into columella cells. Maintains the endogenous auxin gradient, which is essential for correct root patterning. Involved in EXO70A3-regulated gravitropic responses in columella cells and in root system architecture (RSA). Together with PIN3 and PIN7, involved in the connective auxin transport (CAT) that ensures communication across the shoot system, and modulates strigolactone-mediated shoot branching control. The abcb19 pin3 pin4 pin7 quadruple mutant exhibits an additive phenotype on strigolactone-mediated bud outgrowth responses and shoot branching control. The polypeptide is Auxin efflux carrier component 4 (Arabidopsis thaliana (Mouse-ear cress)).